The sequence spans 413 residues: Mitochondrial carrier protein MTM1 (413 aa).

Solcar repeat units follow at residues 59 to 193 (IGFT…FRNR), 205 to 305 (MTFC…IKKR), and 318 to 406 (GVFG…VKYV). Helical transmembrane passes span 65-85 (VFSA…LDVV), 170-190 (NAGL…YDMF), 204-226 (AMTF…TVCY), 284-304 (QLAR…PIKK), 316-336 (LVGV…IAAA), and 378-399 (LFMG…VVSF).

This sequence belongs to the mitochondrial carrier (TC 2.A.29) family. As to expression, ubiquitous.

The protein localises to the mitochondrion inner membrane. In terms of biological role, involved in the mitochondrial activation of MSD1 by specifically facilitating insertion of the essential manganese cofactor. Has the ability to activate iron regulon in an iron-dependent manner. The protein is Mitochondrial carrier protein MTM1 (MTM1) of Arabidopsis thaliana (Mouse-ear cress).